The primary structure comprises 315 residues: S-methyl-5'-thioadenosine phosphorylase (315 aa).

Phosphate is bound by residues serine 22, 65–66, and 98–99; these read RH and SA. Residue methionine 205 coordinates substrate. Serine 206 contacts phosphate. 229–231 is a binding site for substrate; sequence DYD.

This sequence belongs to the PNP/MTAP phosphorylase family. MTAP subfamily. In terms of assembly, homotrimer.

It is found in the cytoplasm. The protein resides in the nucleus. It catalyses the reaction S-methyl-5'-thioadenosine + phosphate = 5-(methylsulfanyl)-alpha-D-ribose 1-phosphate + adenine. It functions in the pathway amino-acid biosynthesis; L-methionine biosynthesis via salvage pathway; S-methyl-5-thio-alpha-D-ribose 1-phosphate from S-methyl-5'-thioadenosine (phosphorylase route): step 1/1. In terms of biological role, catalyzes the reversible phosphorylation of S-methyl-5'-thioadenosine (MTA) to adenine and 5-methylthioribose-1-phosphate. Involved in the breakdown of MTA, a major by-product of polyamine biosynthesis. Responsible for the first step in the methionine salvage pathway after MTA has been generated from S-adenosylmethionine. Has broad substrate specificity with 6-aminopurine nucleosides as preferred substrates. This chain is S-methyl-5'-thioadenosine phosphorylase, found in Mycosarcoma maydis (Corn smut fungus).